A 329-amino-acid polypeptide reads, in one-letter code: E3 ubiquitin-protein ligase SINA-like 4 (329 aa).

Basic and acidic residues predominate over residues 1–12 (MTKLGRRNDGGG). The segment at 1-58 (MTKLGRRNDGGGKSHRSSTKRQRRTSVSVDDPSPGEEEEKTLVVLTDDSDSEEDDKPL) is disordered. Basic residues predominate over residues 13–24 (KSHRSSTKRQRR). Residues 86-122 (CPNCFDPLKKPIFQCNNGHLACFLCCIKLKKRCSFCK) form an RING-type; degenerate zinc finger. The SBD stretch occupies residues 136-325 (VIKAGLVSCS…MEISIGDKND (190 aa)). The segment at 139–198 (AGLVSCSNAIYGCKQSTTYGNQLQSHEKVCVFAPCSCPIKDCNYIGFYKDLINHFRATHK) adopts an SIAH-type zinc-finger fold. Zn(2+) contacts are provided by C144, C151, H164, C168, C175, C180, H192, and H197.

This sequence belongs to the SINA (Seven in absentia) family.

The catalysed reaction is S-ubiquitinyl-[E2 ubiquitin-conjugating enzyme]-L-cysteine + [acceptor protein]-L-lysine = [E2 ubiquitin-conjugating enzyme]-L-cysteine + N(6)-ubiquitinyl-[acceptor protein]-L-lysine.. It functions in the pathway protein modification; protein ubiquitination. Functionally, E3 ubiquitin-protein ligase that mediates ubiquitination and subsequent proteasomal degradation of target proteins. E3 ubiquitin ligases accept ubiquitin from an E2 ubiquitin-conjugating enzyme in the form of a thioester and then directly transfers the ubiquitin to targeted substrates. It probably triggers the ubiquitin-mediated degradation of different substrates. This is E3 ubiquitin-protein ligase SINA-like 4 from Arabidopsis thaliana (Mouse-ear cress).